A 253-amino-acid chain; its full sequence is Imidazole glycerol phosphate synthase subunit HisF (253 aa).

Residues D11 and D130 contribute to the active site.

This sequence belongs to the HisA/HisF family. As to quaternary structure, heterodimer of HisH and HisF.

It localises to the cytoplasm. The catalysed reaction is 5-[(5-phospho-1-deoxy-D-ribulos-1-ylimino)methylamino]-1-(5-phospho-beta-D-ribosyl)imidazole-4-carboxamide + L-glutamine = D-erythro-1-(imidazol-4-yl)glycerol 3-phosphate + 5-amino-1-(5-phospho-beta-D-ribosyl)imidazole-4-carboxamide + L-glutamate + H(+). It participates in amino-acid biosynthesis; L-histidine biosynthesis; L-histidine from 5-phospho-alpha-D-ribose 1-diphosphate: step 5/9. IGPS catalyzes the conversion of PRFAR and glutamine to IGP, AICAR and glutamate. The HisF subunit catalyzes the cyclization activity that produces IGP and AICAR from PRFAR using the ammonia provided by the HisH subunit. The sequence is that of Imidazole glycerol phosphate synthase subunit HisF from Clostridium botulinum (strain 657 / Type Ba4).